We begin with the raw amino-acid sequence, 96 residues long: uncharacterized protein (96 aa).

This is an uncharacterized protein from Invertebrate iridescent virus 6 (IIV-6).